Consider the following 205-residue polypeptide: G-protein coupled receptor (205 aa).

5 consecutive transmembrane segments (helical) span residues Gly40–Tyr60, Phe71–Thr91, Leu107–Ala127, Ile151–Ile171, and Leu185–Trp205. The cysteines at positions 105 and 181 are disulfide-linked.

The protein belongs to the G-protein coupled receptor 1 family.

It is found in the host membrane. The sequence is that of G-protein coupled receptor (U12) from Human herpesvirus 6B (strain Z29) (HHV-6 variant B).